The following is a 362-amino-acid chain: S-adenosylmethionine:tRNA ribosyltransferase-isomerase (362 aa).

The protein belongs to the QueA family. Monomer.

Its subcellular location is the cytoplasm. It catalyses the reaction 7-aminomethyl-7-carbaguanosine(34) in tRNA + S-adenosyl-L-methionine = epoxyqueuosine(34) in tRNA + adenine + L-methionine + 2 H(+). Its pathway is tRNA modification; tRNA-queuosine biosynthesis. Functionally, transfers and isomerizes the ribose moiety from AdoMet to the 7-aminomethyl group of 7-deazaguanine (preQ1-tRNA) to give epoxyqueuosine (oQ-tRNA). This Yersinia enterocolitica serotype O:8 / biotype 1B (strain NCTC 13174 / 8081) protein is S-adenosylmethionine:tRNA ribosyltransferase-isomerase.